The following is a 354-amino-acid chain: Uroporphyrinogen decarboxylase (354 aa).

Substrate contacts are provided by residues 27 to 31, D77, Y154, T209, and H327; that span reads RQAGR.

The protein belongs to the uroporphyrinogen decarboxylase family. As to quaternary structure, homodimer.

The protein localises to the cytoplasm. The enzyme catalyses uroporphyrinogen III + 4 H(+) = coproporphyrinogen III + 4 CO2. The protein operates within porphyrin-containing compound metabolism; protoporphyrin-IX biosynthesis; coproporphyrinogen-III from 5-aminolevulinate: step 4/4. Its function is as follows. Catalyzes the decarboxylation of four acetate groups of uroporphyrinogen-III to yield coproporphyrinogen-III. The chain is Uroporphyrinogen decarboxylase from Salmonella newport (strain SL254).